We begin with the raw amino-acid sequence, 113 residues long: UPF0482 protein YnfB (113 aa).

Positions 1–28 (MKITLSKRIDLLAFLLPCALALSTTVHA) are cleaved as a signal peptide.

It belongs to the UPF0482 family.

The chain is UPF0482 protein YnfB from Escherichia coli O157:H7.